Here is a 100-residue protein sequence, read N- to C-terminus: MELGAATVCVTAVCFNFLVAYSSSPLTLSILSSSICLDDFLGEGVPSVGLFFMEVKNLAKVACLGFLPAEEGNEDDINNGNLDFKGRADERRQPVSNLRM.

Residues 78-100 are disordered; it reads NNGNLDFKGRADERRQPVSNLRM. Positions 84-93 are enriched in basic and acidic residues; it reads FKGRADERRQ.

This is an uncharacterized protein from Saccharomyces cerevisiae (strain ATCC 204508 / S288c) (Baker's yeast).